The following is a 1508-amino-acid chain: Cellulose synthase operon protein C (1508 aa).

A signal peptide spans 1 to 27 (MRRNDLKPFYLAGMLELCLLAAPAAHA). TPR repeat units lie at residues 32 to 65 (TRQL…DPDQ), 119 to 152 (EDSN…KPPP), 314 to 347 (PEAL…NGKW), 354 to 389 (ARYW…LPNE), 391 to 422 (AGHV…DADN), 423 to 456 (AGAL…ERAK), 499 to 532 (AWIR…HGDQ), 692 to 725 (SAYT…QPGN), 726 to 759 (RDAQ…QPSD), 761 to 793 (DTLT…APES), and 794 to 827 (PDVL…QQRQ).

Belongs to the AcsC/BcsC family.

It participates in glycan metabolism; bacterial cellulose biosynthesis. Required for maximal bacterial cellulose synthesis. This chain is Cellulose synthase operon protein C (bcsC), found in Xanthomonas axonopodis pv. citri (strain 306).